Consider the following 190-residue polypeptide: Putative 3-methyladenine DNA glycosylase (190 aa).

It belongs to the DNA glycosylase MPG family.

In Corynebacterium efficiens (strain DSM 44549 / YS-314 / AJ 12310 / JCM 11189 / NBRC 100395), this protein is Putative 3-methyladenine DNA glycosylase.